Consider the following 644-residue polypeptide: Exoribonuclease 2 (644 aa).

An RNB domain is found at 189-516 (REDLTALDFV…NHRLLKAVIK (328 aa)). Positions 561 to 643 (DTRFAAEIVD…ETRSIIARPV (83 aa)) constitute an S1 motif domain.

Belongs to the RNR ribonuclease family. RNase II subfamily.

The protein resides in the cytoplasm. It carries out the reaction Exonucleolytic cleavage in the 3'- to 5'-direction to yield nucleoside 5'-phosphates.. Involved in mRNA degradation. Hydrolyzes single-stranded polyribonucleotides processively in the 3' to 5' direction. This Escherichia coli O17:K52:H18 (strain UMN026 / ExPEC) protein is Exoribonuclease 2.